A 424-amino-acid chain; its full sequence is Anaerobic glycerol-3-phosphate dehydrogenase subunit B (424 aa).

The protein belongs to the anaerobic G-3-P dehydrogenase subunit B family. As to quaternary structure, composed of a catalytic GlpA/B dimer and of membrane bound GlpC. Requires FMN as cofactor.

The catalysed reaction is a quinone + sn-glycerol 3-phosphate = dihydroxyacetone phosphate + a quinol. Its pathway is polyol metabolism; glycerol degradation via glycerol kinase pathway; glycerone phosphate from sn-glycerol 3-phosphate (anaerobic route): step 1/1. Its function is as follows. Conversion of glycerol 3-phosphate to dihydroxyacetone. Uses fumarate or nitrate as electron acceptor. The protein is Anaerobic glycerol-3-phosphate dehydrogenase subunit B of Yersinia pestis bv. Antiqua (strain Antiqua).